The primary structure comprises 321 residues: MFKDINNYVKQNYVVKQIDNKIQVNYTKLLLMGEIDFIEKWPKDDTETIVEIKCVNSINIKYYMQLLLYNFCYYCTRPNSKYSLYRNSFKIINLLTGIEYIFSVSVTPGNMFTILNTLAKVGGLTFSGMNLVYDLETTGAIENQGPFEHKPVIQRSQIYFRNNKYYAIIYPEIIEIAIKDYETGLIIMNKLVKANSTLTLGIQNITGITPNMLVGQSTLDQIKVELEDKLKLFTACNMLAHNGNSFDNKIMLFYKLLNPQQVFFIDTLSVIPVHMESNSKLDKKNLSAIYYQLFKEKFQAHRAMNDVDALIKIMKYLKIEF.

Residues 130-314 enclose the Exonuclease domain; the sequence is NLVYDLETTG…NDVDALIKIM (185 aa).

This is an uncharacterized protein from Acanthamoeba polyphaga (Amoeba).